A 734-amino-acid polypeptide reads, in one-letter code: 5-methyltetrahydropteroyltriglutamate--homocysteine methyltransferase (734 aa).

Residues Arg-15 to Lys-18 and Lys-104 contribute to the 5-methyltetrahydropteroyltri-L-glutamate site. L-homocysteine is bound by residues Ile-409–Ser-411 and Glu-462. L-methionine contacts are provided by residues Ile-409–Ser-411 and Glu-462. 5-methyltetrahydropteroyltri-L-glutamate-binding positions include Arg-493–Cys-494 and Trp-539. L-homocysteine is bound at residue Asp-577. An L-methionine-binding site is contributed by Asp-577. Glu-583 contacts 5-methyltetrahydropteroyltri-L-glutamate. Zn(2+)-binding residues include His-618, Cys-620, and Glu-642. His-672 acts as the Proton donor in catalysis. A Zn(2+)-binding site is contributed by Cys-704.

This sequence belongs to the vitamin-B12 independent methionine synthase family. The cofactor is Zn(2+).

It carries out the reaction 5-methyltetrahydropteroyltri-L-glutamate + L-homocysteine = tetrahydropteroyltri-L-glutamate + L-methionine. The protein operates within amino-acid biosynthesis; L-methionine biosynthesis via de novo pathway; L-methionine from L-homocysteine (MetE route): step 1/1. In terms of biological role, catalyzes the transfer of a methyl group from 5-methyltetrahydrofolate to homocysteine resulting in methionine formation. This chain is 5-methyltetrahydropteroyltriglutamate--homocysteine methyltransferase, found in Thermotoga maritima (strain ATCC 43589 / DSM 3109 / JCM 10099 / NBRC 100826 / MSB8).